A 191-amino-acid polypeptide reads, in one-letter code: Probable GTP-binding protein EngB (191 aa).

The region spanning 19–188 is the EngB-type G domain; sequence NIPEICFMGR…HKKIFELFVE (170 aa). Residues 27-34, 53-57, 70-73, 136-139, and 167-169 contribute to the GTP site; these read GRSNVGKS, GRTQL, DLPG, NKFD, and AST. S34 and T55 together coordinate Mg(2+).

The protein belongs to the TRAFAC class TrmE-Era-EngA-EngB-Septin-like GTPase superfamily. EngB GTPase family. Mg(2+) is required as a cofactor.

Necessary for normal cell division and for the maintenance of normal septation. The protein is Probable GTP-binding protein EngB of Mycoplasma genitalium (strain ATCC 33530 / DSM 19775 / NCTC 10195 / G37) (Mycoplasmoides genitalium).